The following is a 121-amino-acid chain: Large ribosomal subunit protein bL12 (121 aa).

This sequence belongs to the bacterial ribosomal protein bL12 family. Homodimer. Part of the ribosomal stalk of the 50S ribosomal subunit. Forms a multimeric L10(L12)X complex, where L10 forms an elongated spine to which 2 to 4 L12 dimers bind in a sequential fashion. Binds GTP-bound translation factors.

Its function is as follows. Forms part of the ribosomal stalk which helps the ribosome interact with GTP-bound translation factors. Is thus essential for accurate translation. This is Large ribosomal subunit protein bL12 from Shigella sonnei (strain Ss046).